The chain runs to 281 residues: Ras-related protein Rab-40C (281 aa).

Residues Ser-23, Gly-26, Lys-27, and Ser-46 each contribute to the GTP site. The interval 41–49 (SPYAYSNGI) is switch-I. Mg(2+) contacts are provided by Ser-46 and Asp-69. GTP contacts are provided by Gly-72, Asn-126, and Arg-127. Residues 72–88 (GQGRFCTIFRSYSRGAQ) are switch-II. Residues 175-228 (LMRHGMEKIWRPNRVFSLQDLCCRAIVSCTPVHLIDKLPLPVTIKSHLKSFSMA) form the SOCS box domain. Residues 245–281 (SGAGGSGSKGNSLKRSKSIRPPQSPPQNCSRSNCKIS) are disordered. Positions 270 to 281 (PQNCSRSNCKIS) are enriched in polar residues. Cys-273 carries S-palmitoyl cysteine lipidation. A lipid anchor (S-geranylgeranyl cysteine) is attached at Cys-278.

This sequence belongs to the small GTPase superfamily. Rab family. Component of the cullin-5-RING E3 ubiquitin-protein ligase complex (ECS(RAB40C) complex) composed of CUL5, Elongin BC (ELOB and ELOC), RNF7/RBX2 and RAB40C. Interacts with protein phosphatase 6 (PP6) complex components ANKRD28, ANKRD52, PPP6C, PP6R1 and PP6R2; the interaction leads to ANKRD28 ubiquitination and decreased PP6 activity. Interacts with DAB2IP; DAB2IP acts as a GAP for RAB40C. The cofactor is Mg(2+).

The protein localises to the cell membrane. The protein resides in the cytoplasm. It localises to the cytosol. It is found in the golgi apparatus membrane. It carries out the reaction GTP + H2O = GDP + phosphate + H(+). It participates in protein modification; protein ubiquitination. With respect to regulation, regulated by guanine nucleotide exchange factors (GEFs) which promote the exchange of bound GDP for free GTP. Regulated by GTPase activating proteins (GAPs) including DAB2IP, which increase the GTP hydrolysis activity. Inhibited by GDP dissociation inhibitors (GDIs). In terms of biological role, RAB40C small GTPase acts as substrate-recognition component of the ECS(RAB40C) E3 ubiquitin ligase complex which mediates the ubiquitination and subsequent proteasomal degradation of target proteins. The Rab40 subfamily belongs to the Rab family that are key regulators of intracellular membrane trafficking, from the formation of transport vesicles to their fusion with membranes. Rabs cycle between an inactive GDP-bound form and an active GTP-bound form that is able to recruit to membranes different sets of downstream effectors directly responsible for vesicle formation, movement, tethering and fusion. As part of the ECS(RAB40C) complex, mediates ANKRD28 ubiquitination and degradation, thereby inhibiting protein phosphatase 6 (PP6) complex activity and focal adhesion assembly during cell migration. Also negatively regulate lipid droplets accumulation in a GTP-dependent manner. This chain is Ras-related protein Rab-40C, found in Mus musculus (Mouse).